The primary structure comprises 156 residues: Small ribosomal subunit protein uS7 (156 aa).

Belongs to the universal ribosomal protein uS7 family. As to quaternary structure, part of the 30S ribosomal subunit. Contacts proteins S9 and S11.

Functionally, one of the primary rRNA binding proteins, it binds directly to 16S rRNA where it nucleates assembly of the head domain of the 30S subunit. Is located at the subunit interface close to the decoding center, probably blocks exit of the E-site tRNA. This chain is Small ribosomal subunit protein uS7, found in Shewanella baltica (strain OS223).